The chain runs to 879 residues: DNA mismatch repair protein MutS (879 aa).

629–636 contributes to the ATP binding site; the sequence is GPNMAGKS.

Belongs to the DNA mismatch repair MutS family.

This protein is involved in the repair of mismatches in DNA. It is possible that it carries out the mismatch recognition step. This protein has a weak ATPase activity. The chain is DNA mismatch repair protein MutS from Ruegeria sp. (strain TM1040) (Silicibacter sp.).